The chain runs to 338 residues: GTPase Obg (338 aa).

Residues 1–159 (MKFIDEVTLF…AKLRLELKLM (159 aa)) enclose the Obg domain. Residues 160–331 (ADVGLLGLPN…LLDEIARRLW (172 aa)) enclose the OBG-type G domain. Residues 166 to 173 (GLPNAGKS), 191 to 195 (FTTIK), 213 to 216 (DIPG), 283 to 286 (TKLD), and 312 to 314 (SSA) each bind GTP. S173 and T193 together coordinate Mg(2+).

This sequence belongs to the TRAFAC class OBG-HflX-like GTPase superfamily. OBG GTPase family. Monomer. Mg(2+) is required as a cofactor.

It is found in the cytoplasm. In terms of biological role, an essential GTPase which binds GTP, GDP and possibly (p)ppGpp with moderate affinity, with high nucleotide exchange rates and a fairly low GTP hydrolysis rate. Plays a role in control of the cell cycle, stress response, ribosome biogenesis and in those bacteria that undergo differentiation, in morphogenesis control. The protein is GTPase Obg of Pelobacter propionicus (strain DSM 2379 / NBRC 103807 / OttBd1).